The chain runs to 89 residues: Small ribosomal subunit protein uS15 (89 aa).

The protein belongs to the universal ribosomal protein uS15 family. As to quaternary structure, part of the 30S ribosomal subunit. Forms a bridge to the 50S subunit in the 70S ribosome, contacting the 23S rRNA.

Its function is as follows. One of the primary rRNA binding proteins, it binds directly to 16S rRNA where it helps nucleate assembly of the platform of the 30S subunit by binding and bridging several RNA helices of the 16S rRNA. In terms of biological role, forms an intersubunit bridge (bridge B4) with the 23S rRNA of the 50S subunit in the ribosome. The chain is Small ribosomal subunit protein uS15 from Baumannia cicadellinicola subsp. Homalodisca coagulata.